The sequence spans 237 residues: Class B acid phosphatase (237 aa).

An N-terminal signal peptide occupies residues 1-23; that stretch reads MRKTPLALSAVFLLLSLNQSAFA. Asp-69 acts as the Nucleophile in catalysis. Asp-69 and Asp-71 together coordinate Mg(2+). Residue Asp-71 is the Proton donor of the active site. Substrate contacts are provided by residues 137–138 and Lys-177; that span reads TG. Asp-192 is a binding site for Mg(2+).

It belongs to the class B bacterial acid phosphatase family. Homotetramer. Mg(2+) serves as cofactor.

The protein resides in the periplasm. It catalyses the reaction a phosphate monoester + H2O = an alcohol + phosphate. Its function is as follows. Dephosphorylates several organic phosphate monoesters. Also has a phosphotransferase activity catalyzing the transfer of low-energy phosphate groups from organic phosphate monoesters to free hydroxyl groups of various organic compounds. The chain is Class B acid phosphatase from Rahnella sp. (strain Y9602).